A 456-amino-acid polypeptide reads, in one-letter code: Phosphomethylpyrimidine synthase (456 aa).

Residues asparagine 80, methionine 109, tyrosine 139, histidine 175, 195–197 (SRG), 236–239 (DSLR), and glutamate 275 contribute to the substrate site. Histidine 279 contacts Zn(2+). A substrate-binding site is contributed by tyrosine 302. Residue histidine 343 coordinates Zn(2+). [4Fe-4S] cluster-binding residues include cysteine 423, cysteine 426, and cysteine 431.

The protein belongs to the ThiC family. [4Fe-4S] cluster is required as a cofactor.

The enzyme catalyses 5-amino-1-(5-phospho-beta-D-ribosyl)imidazole + S-adenosyl-L-methionine = 4-amino-2-methyl-5-(phosphooxymethyl)pyrimidine + CO + 5'-deoxyadenosine + formate + L-methionine + 3 H(+). It participates in cofactor biosynthesis; thiamine diphosphate biosynthesis. Catalyzes the synthesis of the hydroxymethylpyrimidine phosphate (HMP-P) moiety of thiamine from aminoimidazole ribotide (AIR) in a radical S-adenosyl-L-methionine (SAM)-dependent reaction. This Prochlorococcus marinus (strain AS9601) protein is Phosphomethylpyrimidine synthase.